The primary structure comprises 675 residues: Cytoplasmic tyrosine-protein kinase BMX (675 aa).

Positions 4–111 (KSILEELLLK…WLKALQKEIR (108 aa)) constitute a PH domain. Residues 113 to 149 (NPHLLVKYHSGFFVDGKFLCCQQSCKAAPGCTLWEAY) form a Btk-type zinc finger. Zn(2+)-binding residues include histidine 121, cysteine 132, cysteine 133, and cysteine 143. 2 positions are modified to phosphotyrosine; by autocatalysis: tyrosine 216 and tyrosine 224. Positions 296–392 (WFAGNISRSQ…GMITRLRHPV (97 aa)) constitute an SH2 domain. A Protein kinase domain is found at 417 to 675 (ITLLKELGSG…IEPLREKDKH (259 aa)). Residues 423 to 431 (LGSGQFGVV) and lysine 445 contribute to the ATP site. Aspartate 536 (proton acceptor) is an active-site residue. Tyrosine 566 is modified (phosphotyrosine; by SRC and autocatalysis). A CAV1-binding motif is present at residues 596 to 603 (WAFGILMW).

The protein belongs to the protein kinase superfamily. Tyr protein kinase family. TEC subfamily. Interacts with BCAR1, CAV1, MYD88, PTK2/FAK1, RUFY1, RUFY2, STAT3, TIRAP and TNFRSF1B. The cofactor is Zn(2+). Post-translationally, phosphorylated in response to protein I/II and to LPS. Phosphorylation at Tyr-566 by SRC and by autocatalysis leads to activation and is required for STAT3 phosphorylation by BMX. As to expression, highly expressed in cells with great migratory potential, including endothelial cells and metastatic carcinoma cell lines.

Its subcellular location is the cytoplasm. The enzyme catalyses L-tyrosyl-[protein] + ATP = O-phospho-L-tyrosyl-[protein] + ADP + H(+). TEK and vascular endothelial growth factor receptor 1 (FLT1) stimulate BMX tyrosine kinase activity. Activated by integrins through the mediation of PTK2/FAK1. Activated by TNF through the mediation of TNFRSF1B. Non-receptor tyrosine kinase that plays central but diverse modulatory roles in various signaling processes involved in the regulation of actin reorganization, cell migration, cell proliferation and survival, cell adhesion, and apoptosis. Participates in signal transduction stimulated by growth factor receptors, cytokine receptors, G-protein coupled receptors, antigen receptors and integrins. Induces tyrosine phosphorylation of BCAR1 in response to integrin regulation. Activation of BMX by integrins is mediated by PTK2/FAK1, a key mediator of integrin signaling events leading to the regulation of actin cytoskeleton and cell motility. Plays a critical role in TNF-induced angiogenesis, and implicated in the signaling of TEK and FLT1 receptors, 2 important receptor families essential for angiogenesis. Required for the phosphorylation and activation of STAT3, a transcription factor involved in cell differentiation. Also involved in interleukin-6 (IL6) induced differentiation. Also plays a role in programming adaptive cytoprotection against extracellular stress in different cell systems, salivary epithelial cells, brain endothelial cells, and dermal fibroblasts. May be involved in regulation of endocytosis through its interaction with an endosomal protein RUFY1. May also play a role in the growth and differentiation of hematopoietic cells; as well as in signal transduction in endocardial and arterial endothelial cells. In Homo sapiens (Human), this protein is Cytoplasmic tyrosine-protein kinase BMX (BMX).